The chain runs to 321 residues: MSGDNSSSLTPGFFILNGVPGLEATHIWISLPFCFMYIIAVVGNCGLICLISHEEALHRPMYYFLALLSFTDVTLCTTMVPNMLCIFWFNLKEIDFNACLAQMFFVHMLTGMESGVLMLMALDRYVAICYPLRYATILTNPVIAKAGLATFLRNVMLIIPFTLLTKRLPYCRGNFIPHTYCDHMSVAKVSCGNFKVNAIYGLMVALLIGVFDICCISVSYTMILQAVMSLSSADARHKAFSTCTSHMCSIVITYVAAFFTFFTHRFVGHNIPNHIHIIVANLYLLLPPTMNPIVYGVKTKQIQEGVIKFLLGDKVSFTYDK.

Residues 1-27 (MSGDNSSSLTPGFFILNGVPGLEATHI) are Extracellular-facing. N-linked (GlcNAc...) asparagine glycosylation occurs at N5. A helical transmembrane segment spans residues 28–48 (WISLPFCFMYIIAVVGNCGLI). Topologically, residues 49–56 (CLISHEEA) are cytoplasmic. Residues 57-77 (LHRPMYYFLALLSFTDVTLCT) traverse the membrane as a helical segment. Residues 78-101 (TMVPNMLCIFWFNLKEIDFNACLA) lie on the Extracellular side of the membrane. C99 and C191 form a disulfide bridge. The helical transmembrane segment at 102–122 (QMFFVHMLTGMESGVLMLMAL) threads the bilayer. Residues 123 to 141 (DRYVAICYPLRYATILTNP) lie on the Cytoplasmic side of the membrane. The helical transmembrane segment at 142-162 (VIAKAGLATFLRNVMLIIPFT) threads the bilayer. The Extracellular portion of the chain corresponds to 163 to 198 (LLTKRLPYCRGNFIPHTYCDHMSVAKVSCGNFKVNA). A helical transmembrane segment spans residues 199-219 (IYGLMVALLIGVFDICCISVS). The Cytoplasmic portion of the chain corresponds to 220–239 (YTMILQAVMSLSSADARHKA). Residues 240–260 (FSTCTSHMCSIVITYVAAFFT) form a helical membrane-spanning segment. Over 261-276 (FFTHRFVGHNIPNHIH) the chain is Extracellular. Residues 277-297 (IIVANLYLLLPPTMNPIVYGV) traverse the membrane as a helical segment. Over 298–321 (KTKQIQEGVIKFLLGDKVSFTYDK) the chain is Cytoplasmic.

This sequence belongs to the G-protein coupled receptor 1 family.

The protein resides in the cell membrane. Its function is as follows. Odorant receptor. The chain is Olfactory receptor 52N2 (OR52N2) from Homo sapiens (Human).